The primary structure comprises 690 residues: MDTSRRAVESYWRSRMIDAVTSDEDKVAPVYKLEEICDLLRSSHVSIVKEFSEFILKRLDNKSPIVKQKALRLIKYAVGKSGSEFRREMQRNSVAVRNLFHYKGHPDPLKGDALNKAVRETAHETISAIFSEENGTKPAAPESINRRIEGFGNTNFQVPSNDNKSFLSEVVGIGSASIKQGISNFAQGHLPKKNENGSSSYRGPNLHRSLTMENENFSRYDPVKLGKDGNYGTSKNTTGGSWGHASGEASESSASVRVESKTREEKLLETIVTSGGVRLQPTRDALHVFILEAAKMDAVALSIALDGKLHSPMWQVRMKALCVLEAILRKKEDENFSIVHTYFSENLDAIQRCAESPQSSLREKANKVLSLLNGGQSSGLMSSSDNTVKREAAVDLPDLIDTGDSDDTLNNLNAIDTGSTVATAGPLMDDDWFGDSSDIGLSSSEKKTDDDPFADVSFHPNEEKESADDLFSGMTVGEKSAAVGGNHVPDLFDMFGSTAKLEAEPKDAKNINDLMGSFSIDENNSNQKGSSSSTLPQDLFAMPSTTSHQAPENPVGGILGSQNPGFIQNTMLPGGVMPFNFPQGMMMNPAFASQPLNYAAMASLLAQQQQYLGNMSNFQQFGNLNAQGSGNVLSMGTSGGNQSALPDIFQPNFGNQAPTSTMNGSKKEDTRAFDFISDHLTSARDTKRVS.

One can recognise a VHS domain in the interval 20 to 150 (VTSDEDKVAP…PESINRRIEG (131 aa)). Disordered stretches follow at residues 228–258 (DGNY…SVRV) and 518–551 (FSID…HQAP). The span at 243 to 257 (GHASGEASESSASVR) shows a compositional bias: low complexity. A compositionally biased stretch (polar residues) spans 520-536 (IDENNSNQKGSSSSTLP).

As to quaternary structure, binds to clathrin heavy chain. In terms of tissue distribution, expressed in inflorescence stems, stigmas, roots, roots meristems, embryos, and floral and leaf vasculatures, but absent from the floral abscission zone.

The protein resides in the golgi apparatus. Its subcellular location is the trans-Golgi network. It localises to the cytoplasmic vesicle. It is found in the clathrin-coated vesicle. In terms of biological role, mediates clathrin-dependent trafficking of vacuolar cargo from the trans-Golgi network (TGN). Promotes plant growth. This Arabidopsis thaliana (Mouse-ear cress) protein is Protein MODIFIED TRANSPORT TO THE VACUOLE 1.